The primary structure comprises 106 residues: Toxin-like structure LSTX-D8 (106 aa).

An N-terminal signal peptide occupies residues 1 to 20 (MTKVLVVVALLVTLISYSSS). Residues 21–41 (EGIDDLEADELLSLMANEQTR) constitute a propeptide that is removed on maturation. Intrachain disulfides connect Cys-45-Cys-60, Cys-52-Cys-69, Cys-59-Cys-85, and Cys-71-Cys-83.

The protein belongs to the neurotoxin 19 (CSTX) family. 02 (D7) subfamily. As to expression, expressed by the venom gland.

It localises to the secreted. The chain is Toxin-like structure LSTX-D8 from Lycosa singoriensis (Wolf spider).